A 311-amino-acid polypeptide reads, in one-letter code: Olfactory receptor 10G9 (311 aa).

Over 1–23 (MSKTSLVTAFILTGLPHAPGLDA) the chain is Extracellular. Residues 24–44 (PLFGIFLVVYVLTVLGNLLIL) form a helical membrane-spanning segment. Topologically, residues 45 to 52 (LVIRVDSH) are cytoplasmic. The chain crosses the membrane as a helical span at residues 53–73 (LHTPMYYFLTNLSFIDMWFST). The Extracellular portion of the chain corresponds to 74-98 (VTVPKMLMTLVSPSGRAISFHSCVA). An intrachain disulfide couples Cys96 to Cys188. A helical transmembrane segment spans residues 99–119 (QLYFFHFLGSTECFLYTVMSY). The Cytoplasmic segment spans residues 120-138 (DRYLAISYPLRYTSMMSGS). Residues 139 to 159 (RCALLATSTWLSGSLHSAVQT) traverse the membrane as a helical segment. Residues 160-196 (ILTFHLPYCGPNQIQHYLCDAPPILKLACADTSANEM) lie on the Extracellular side of the membrane. A helical transmembrane segment spans residues 197–216 (VIFVDIGLVASGCFLLIVLS). Residues 217 to 236 (YVSIVCSILRIHTSEGRHRA) are Cytoplasmic-facing. Residues 237–257 (FQTCASHCIVVLCFFVPCVFI) form a helical membrane-spanning segment. The Extracellular segment spans residues 258 to 268 (YLRPGSRDVVD). A helical membrane pass occupies residues 269–289 (GVVAIFYTVLTPLLNPVVYTL). The Cytoplasmic segment spans residues 290–311 (RNKEVKKAVLKLRDKVAHSQGE).

It belongs to the G-protein coupled receptor 1 family.

The protein localises to the cell membrane. Its function is as follows. Odorant receptor. This is Olfactory receptor 10G9 (OR10G9) from Homo sapiens (Human).